The sequence spans 234 residues: Leucyl/phenylalanyl-tRNA--protein transferase (234 aa).

This sequence belongs to the L/F-transferase family.

The protein resides in the cytoplasm. The enzyme catalyses N-terminal L-lysyl-[protein] + L-leucyl-tRNA(Leu) = N-terminal L-leucyl-L-lysyl-[protein] + tRNA(Leu) + H(+). The catalysed reaction is N-terminal L-arginyl-[protein] + L-leucyl-tRNA(Leu) = N-terminal L-leucyl-L-arginyl-[protein] + tRNA(Leu) + H(+). It carries out the reaction L-phenylalanyl-tRNA(Phe) + an N-terminal L-alpha-aminoacyl-[protein] = an N-terminal L-phenylalanyl-L-alpha-aminoacyl-[protein] + tRNA(Phe). In terms of biological role, functions in the N-end rule pathway of protein degradation where it conjugates Leu, Phe and, less efficiently, Met from aminoacyl-tRNAs to the N-termini of proteins containing an N-terminal arginine or lysine. This is Leucyl/phenylalanyl-tRNA--protein transferase from Salmonella gallinarum (strain 287/91 / NCTC 13346).